The following is a 669-amino-acid chain: DNA ligase (669 aa).

NAD(+)-binding positions include 34-38 (DAEYD), 83-84 (SL), and glutamate 114. The active-site N6-AMP-lysine intermediate is the lysine 116. NAD(+) contacts are provided by arginine 137, glutamate 171, lysine 287, and lysine 311. Residues cysteine 405, cysteine 408, cysteine 423, and cysteine 428 each contribute to the Zn(2+) site. Residues 591–669 (NVESYFAGKT…EERFLQELNK (79 aa)) enclose the BRCT domain.

This sequence belongs to the NAD-dependent DNA ligase family. LigA subfamily. Mg(2+) is required as a cofactor. Mn(2+) serves as cofactor.

It carries out the reaction NAD(+) + (deoxyribonucleotide)n-3'-hydroxyl + 5'-phospho-(deoxyribonucleotide)m = (deoxyribonucleotide)n+m + AMP + beta-nicotinamide D-nucleotide.. Its function is as follows. DNA ligase that catalyzes the formation of phosphodiester linkages between 5'-phosphoryl and 3'-hydroxyl groups in double-stranded DNA using NAD as a coenzyme and as the energy source for the reaction. It is essential for DNA replication and repair of damaged DNA. The chain is DNA ligase from Bacillus cereus (strain B4264).